The sequence spans 422 residues: Serine--tRNA ligase (422 aa).

Residue 229–231 (TAE) coordinates L-serine. Residue 260–262 (RKE) participates in ATP binding. E283 provides a ligand contact to L-serine. 347-350 (EISS) lines the ATP pocket. S383 provides a ligand contact to L-serine.

The protein belongs to the class-II aminoacyl-tRNA synthetase family. Type-1 seryl-tRNA synthetase subfamily. As to quaternary structure, homodimer. The tRNA molecule binds across the dimer.

It localises to the cytoplasm. The enzyme catalyses tRNA(Ser) + L-serine + ATP = L-seryl-tRNA(Ser) + AMP + diphosphate + H(+). It catalyses the reaction tRNA(Sec) + L-serine + ATP = L-seryl-tRNA(Sec) + AMP + diphosphate + H(+). It participates in aminoacyl-tRNA biosynthesis; selenocysteinyl-tRNA(Sec) biosynthesis; L-seryl-tRNA(Sec) from L-serine and tRNA(Sec): step 1/1. Catalyzes the attachment of serine to tRNA(Ser). Is also able to aminoacylate tRNA(Sec) with serine, to form the misacylated tRNA L-seryl-tRNA(Sec), which will be further converted into selenocysteinyl-tRNA(Sec). This is Serine--tRNA ligase from Geotalea uraniireducens (strain Rf4) (Geobacter uraniireducens).